Here is a 228-residue protein sequence, read N- to C-terminus: Ribose-5-phosphate isomerase A (228 aa).

Residues Thr-32–Thr-35, Asp-85–Asp-88, and Lys-98–Gly-101 contribute to the substrate site. Glu-107 acts as the Proton acceptor in catalysis. Lys-125 provides a ligand contact to substrate.

This sequence belongs to the ribose 5-phosphate isomerase family. As to quaternary structure, homodimer.

The enzyme catalyses aldehydo-D-ribose 5-phosphate = D-ribulose 5-phosphate. The protein operates within carbohydrate degradation; pentose phosphate pathway; D-ribose 5-phosphate from D-ribulose 5-phosphate (non-oxidative stage): step 1/1. In terms of biological role, catalyzes the reversible conversion of ribose-5-phosphate to ribulose 5-phosphate. This chain is Ribose-5-phosphate isomerase A, found in Ralstonia pickettii (strain 12J).